The chain runs to 445 residues: Eukaryotic translation initiation factor 3 subunit E (445 aa).

The 174-residue stretch at 230–403 (FFNHVKGRDL…GHVVMGAQPL (174 aa)) folds into the PCI domain.

The protein belongs to the eIF-3 subunit E family. In terms of assembly, component of the eukaryotic translation initiation factor 3 (eIF-3) complex.

It is found in the cytoplasm. Its function is as follows. Component of the eukaryotic translation initiation factor 3 (eIF-3) complex, which is involved in protein synthesis of a specialized repertoire of mRNAs and, together with other initiation factors, stimulates binding of mRNA and methionyl-tRNAi to the 40S ribosome. The eIF-3 complex specifically targets and initiates translation of a subset of mRNAs involved in cell proliferation. The polypeptide is Eukaryotic translation initiation factor 3 subunit E (eIF3-S6) (Bombyx mori (Silk moth)).